We begin with the raw amino-acid sequence, 518 residues long: Nicotine N-demethylase CYP82E3 (518 aa).

The chain crosses the membrane as a helical span at residues 2 to 22; the sequence is VFPVEAIVGLVTFTFLFYFLW. Residue Lys-254 forms a Glycyl lysine isopeptide (Lys-Gly) (interchain with G-Cter in ubiquitin) linkage. Cys-458 is a binding site for heme.

This sequence belongs to the cytochrome P450 family. CYP82E2 subfamily. It depends on heme as a cofactor. In terms of tissue distribution, expressed in leaves.

The protein localises to the membrane. The enzyme catalyses (S)-nicotine + reduced [NADPH--hemoprotein reductase] + O2 = (S)-nornicotine + formaldehyde + oxidized [NADPH--hemoprotein reductase] + H2O + H(+). It participates in alkaloid biosynthesis; nicotine biosynthesis. Involved in the biosynthesis of pyridine alkaloid natural products, leading mainly to the production of anabasine, anatabine, nicotine and nornicotine, effective deterrents against herbivores with antiparasitic and pesticide properties (neurotoxins); nornicotine serves as the precursor in the synthesis of the carcinogen compound N'-nitrosonornicotine (NNN). Catalyzes the demethylation of nicotine to form nornicotine. In Nicotiana tomentosiformis (Tobacco), this protein is Nicotine N-demethylase CYP82E3.